The sequence spans 410 residues: Elongation factor Tu, chloroplastic (410 aa).

The region spanning 10 to 214 (KPHVNIGTIG…NVDEYIPTPE (205 aa)) is the tr-type G domain. The segment at 19 to 26 (GHVDHGKT) is G1. Position 19 to 26 (19 to 26 (GHVDHGKT)) interacts with GTP. Thr-26 contributes to the Mg(2+) binding site. The G2 stretch occupies residues 60–64 (GITIN). The G3 stretch occupies residues 81-84 (DCPG). Residues 81 to 85 (DCPGH) and 136 to 139 (NKED) contribute to the GTP site. The segment at 136-139 (NKED) is G4. The G5 stretch occupies residues 174–176 (SAL).

This sequence belongs to the TRAFAC class translation factor GTPase superfamily. Classic translation factor GTPase family. EF-Tu/EF-1A subfamily.

It is found in the plastid. The protein localises to the chloroplast stroma. The catalysed reaction is GTP + H2O = GDP + phosphate + H(+). Its function is as follows. GTP hydrolase that promotes the GTP-dependent binding of aminoacyl-tRNA to the A-site of ribosomes during protein biosynthesis. In Bigelowiella natans (Pedinomonas minutissima), this protein is Elongation factor Tu, chloroplastic (tufA).